The primary structure comprises 131 residues: Increased copper sensitivity protein 3 (131 aa).

Transmembrane regions (helical) follow at residues 35–55 (ISVL…IFFS) and 74–94 (IALT…IIAF).

The protein localises to the membrane. This Saccharomyces cerevisiae (strain ATCC 204508 / S288c) (Baker's yeast) protein is Increased copper sensitivity protein 3 (ICS3).